The following is a 567-amino-acid chain: NAC domain-containing protein 78 (567 aa).

In terms of domain architecture, NAC spans Leu-9–Lys-159. Residues Val-108–Lys-165 mediate DNA binding. Positions Asn-393–Asp-436 are disordered. Over residues Leu-397–Gly-423 the composition is skewed to basic and acidic residues. A helical transmembrane segment spans residues Leu-544–Val-564.

As to expression, expressed in root meristem. Expressed in roots, rosette leaves, cauline leaves, shoot apex, stems and flowers.

The protein localises to the membrane. Its subcellular location is the nucleus. Its function is as follows. Transcriptional activator activated by proteolytic cleavage through regulated intramembrane proteolysis (RIP). Transcripition activator associated with the induction of genes related to flavonoid biosynthesis and required for the accumulation of anthocyanins in response to high light stress. Plays a role in the regulation of 20S and 26S proteasomes in response to high light stress. This Arabidopsis thaliana (Mouse-ear cress) protein is NAC domain-containing protein 78 (NAC078).